The primary structure comprises 353 residues: Melatonin receptor type 1A (353 aa).

The segment covering 1–15 (MKGNGSTLLNASQQA) has biased composition (polar residues). The disordered stretch occupies residues 1 to 23 (MKGNGSTLLNASQQAPGVGEGGG). Residues 1–32 (MKGNGSTLLNASQQAPGVGEGGGPRPSWLAST) lie on the Extracellular side of the membrane. Asn-4 and Asn-10 each carry an N-linked (GlcNAc...) asparagine glycan. The helical transmembrane segment at 33 to 53 (LAFILIFTIVVDILGNLLVIL) threads the bilayer. The Cytoplasmic portion of the chain corresponds to 54 to 66 (SVYRNKKLRNAGN). A helical transmembrane segment spans residues 67-87 (IFVVSLAIADLVVAIYPYPLV). The Extracellular portion of the chain corresponds to 88 to 105 (LTSIFNNGWNLGYLHCQI). Cys-103 and Cys-180 form a disulfide bridge. Residues 106 to 126 (SAFLMGLSVIGSIFNITGIAI) form a helical membrane-spanning segment. The Cytoplasmic portion of the chain corresponds to 127 to 147 (NRYCYICHSLKYDRLYSNKNS). Residues 148–168 (LCYVFLIWVLTLVAIMPNLQT) traverse the membrane as a helical segment. At 169-190 (GTLQYDPRIYSCTFTQSVSSAY) the chain is on the extracellular side. Residues 191–211 (TIAVVVFHFIVPMIIVIFCYL) traverse the membrane as a helical segment. The Cytoplasmic segment spans residues 212-243 (RIWILVLQVRRRVKPDSKPRLKPQDFRNFVTM). The chain crosses the membrane as a helical span at residues 244-264 (FVVFVLFAICWAPLNFIGLIV). The Extracellular portion of the chain corresponds to 265–277 (ASDPATMAPRIPE). The chain crosses the membrane as a helical span at residues 278 to 298 (WLFVASYYMAYFNSCLNAIIY). Residues 299 to 353 (GLLNQNFRQEYKRILVSLFTAKMCFVDSSNDPADKIKCKPAPLIANNNLIKVDSV) lie on the Cytoplasmic side of the membrane.

The protein belongs to the G-protein coupled receptor 1 family. As to expression, at least in the brain, more precisely in the pars tuberalis and the suprachiasmatic nucleus.

Its subcellular location is the cell membrane. In terms of biological role, high affinity receptor for melatonin. Likely to mediate the reproductive and circadian actions of melatonin. The activity of this receptor is mediated by pertussis toxin sensitive G proteins that inhibit adenylate cyclase activity. Possibly involved in sleep induction, by melatonin activation of the potassium channel KCNMA1/BK and the dissociation of G-beta and G-gamma subunits, thereby decreasing synaptic transmission. The sequence is that of Melatonin receptor type 1A (MTNR1A) from Phodopus sungorus (Striped hairy-footed hamster).